The primary structure comprises 234 residues: uncharacterized protein (234 aa).

The HTH tetR-type domain occupies 24-83 (VERRNELVDGTIEAIRRHGRFLSMDEIAAEIGVSKTVLYRYFVDKNDLTTAVMMRFTQTT). The H-T-H motif DNA-binding region spans 46 to 65 (SMDEIAAEIGVSKTVLYRYF).

This is an uncharacterized protein from Mycobacterium tuberculosis (strain CDC 1551 / Oshkosh).